Here is a 375-residue protein sequence, read N- to C-terminus: MAENSLSDGGPADSVEAAKNASNTEKLTDQVMQNPQVLAALQERLDNVSHTPSSYIETLPKAVKRRINALKQLQVRCAHIEAKFYEEVHDLERKYAALYQPLFDKRREFITGDVEPTDAESAWHSENEEEDKLAGDMKNKVVIAEKEAATVEELNPKGIPEFWFTIFRNVDMLSELVQEYDEPILKHLQDIKVKFSDPGQPMSFVLEFHFEPNDYFTNPVLTKTYKMKSEPDKADPFSFEGPEIVDCDGCTIDWKKGKNVTVKTIKKKQKHKGRGTVRTITKQVPNESFFNFFSPLKASGDGESLDEDSEFTLASDFEIGHFFRERIVPRAVLYFTGEAIEDDDNFEEGEEGEEEELEGDEEGEDEDDADVNPKV.

Residues 1–28 (MAENSLSDGGPADSVEAAKNASNTEKLT) form a disordered region. An N-acetylalanine modification is found at Ala2. Residues Ser5, Ser7, and Ser49 each carry the phosphoserine modification. Residue Thr51 is modified to Phosphothreonine. Phosphoserine is present on residues Ser53 and Ser54. At Thr58 the chain carries Phosphothreonine. An N6-acetyllysine modification is found at Lys105. Ser125 is modified (phosphoserine). Lys146 carries the post-translational modification N6-acetyllysine. The Nuclear localization signal motif lies at 265-271 (IKKKQKH). Ser304 carries the phosphoserine modification. The interval 339–375 (AIEDDDNFEEGEEGEEEELEGDEEGEDEDDADVNPKV) is disordered.

The protein belongs to the nucleosome assembly protein (NAP) family. Interacts with core (H2A, H2B, H3, H4) and linker (H1) histones. Polyglutamylated and polyglycylated. These 2 modifications occur exclusively on glutamate residues and result in either polyglutamate or polyglycine chains on the gamma-carboxyl group. Both modifications can coexist on the same protein on adjacent residues, and lowering polyglycylation levels increases polyglutamylation, and reciprocally. Polyglutamylated by TTLL4. Post-translationally, phosphorylated at the G0/G1 boundary but it is not phosphorylated in S-phase. Phosphorylated protein remains in the cytoplasm in a complex with histones during the G0/G1 transition, whereas dephosphorylation triggers its transport into the nucleus at the G1/S-boundary.

The protein localises to the nucleus. Its subcellular location is the cytoplasm. In terms of biological role, acts as a histone chaperone in nucleosome assembly. In condensing spermatids, mediates the loading of the heterodimer composed of histones H2AB1 and H2BC1/TH2B onto the nucleosomes, thereby promoting the replacement of histones to protamine in male germ cells. This chain is Nucleosome assembly protein 1-like 4 (Nap1l4), found in Mus musculus (Mouse).